The chain runs to 170 residues: Large ribosomal subunit protein uL11 (170 aa).

Belongs to the universal ribosomal protein uL11 family. As to quaternary structure, part of the ribosomal stalk of the 50S ribosomal subunit. Interacts with L10 and the large rRNA to form the base of the stalk. L10 forms an elongated spine to which L12 dimers bind in a sequential fashion forming a multimeric L10(L12)X complex.

Functionally, forms part of the ribosomal stalk which helps the ribosome interact with GTP-bound translation factors. The polypeptide is Large ribosomal subunit protein uL11 (Desulfurococcus amylolyticus (strain DSM 18924 / JCM 16383 / VKM B-2413 / 1221n) (Desulfurococcus kamchatkensis)).